A 113-amino-acid chain; its full sequence is Con-Ins G3b (113 aa).

An N-terminal signal peptide occupies residues 1-21 (MTTSFYFLLVALGLLLYVCQS). Residues 22–29 (SFGNQHTR) constitute a propeptide that is removed on maturation. P34 carries the 4-hydroxyproline; partial modification. 3 disulfides stabilise this stretch: C38-C99, C50-C112, and C98-C103. The residue at position 41 (E41) is a 4-carboxyglutamate. H51 bears the Histidine amide mark. Positions 52 to 92 (GKRNDAGKKRGRASPLWQRQGFLSMLKAKRNEAFFLQRDGR) are cleaved as a propeptide — c peptide. Residue E96 is modified to 4-carboxyglutamate. At P102 the chain carries 4-hydroxyproline; partial.

The protein belongs to the insulin family. As to quaternary structure, heterodimer of A and B chains; disulfide-linked. It is noteworthy that in this dimer, in contrast to Con-Ins G1, the chain B is amidated and not the chain A. Expressed by the venom gland.

The protein localises to the secreted. Its function is as follows. This venom insulin, from a fish-hunting cone snail, facilitates prey capture by rapidly inducing hypoglycemic shock. It is one of the smallest known insulin found in nature and lacks the C-terminal segment of the B chain that, in human insulin, mediates engagement of the insulin receptor (INSR) and assembly of the hormone's hexameric storage form. Despite lacking this segment, it both binds and activates human insulin receptor (long isoform (HIR-B)) with only a 10-fold lower potency. In vivo, intraperitoneal injection of this peptide into zebrafish lowers blood glucose with the same potency than human insulin. In addition, when applied to water, this peptide reduces overall locomotor activity of zebrafish larvae, observed as a significant decrease in the percentage of time spent swimming and movement frequency. In Conus geographus (Geography cone), this protein is Con-Ins G3b.